The chain runs to 521 residues: Vang-like protein 2 (521 aa).

Positions 1 to 81 (MDTESQYSGY…TTVVTGTSEH (81 aa)) are disordered. Residues 1–108 (MDTESQYSGY…VPLDCSRHLG (108 aa)) lie on the Cytoplasmic side of the membrane. A compositionally biased stretch (basic residues) spans 15–33 (GHSRSSRKHRDRRDRHRSK). The segment covering 57–67 (ESTRGDERDDN) has biased composition (basic and acidic residues). Over residues 69 to 81 (GETTTVVTGTSEH) the composition is skewed to low complexity. The chain crosses the membrane as a helical span at residues 109–129 (VAAGATLALLSFLTPLAFLLL). The Extracellular portion of the chain corresponds to 130–147 (PPLLWREELEPCGTACEG). Residues 148 to 168 (LFISVAFKLLILLLGSWALFF) traverse the membrane as a helical segment. Topologically, residues 169–178 (RRPKASLPRV) are cytoplasmic. A helical transmembrane segment spans residues 179 to 199 (FVLRALLMVLVFLLVVSYWLF). The Extracellular portion of the chain corresponds to 200–217 (YGVRILDARERSYQGVVQ). The chain crosses the membrane as a helical span at residues 218–238 (FAVSLVDALLFVHYLAVVLLE). Over 239-521 (LRQLQPQFTL…VMRLQSETSV (283 aa)) the chain is Cytoplasmic.

The protein belongs to the Vang family. Homodimer and heterodimer with VANGL1. Interacts through its C-terminal region with the N-terminal half of DVL1, DVL2 and DVL3. The PDZ domain of DVL1, DVL2 and DVL3 is required for the interaction. Also interacts with the PDZ domains of MAGI3, SCRIB/SCRB1 and FZD3. Interacts with PRICKLE3.

It is found in the cell membrane. Its function is as follows. Involved in the control of early morphogenesis and patterning of both axial midline structures and the development of neural plate. Plays a role in the regulation of planar cell polarity, particularly in the orientation of stereociliary bundles in the cochlea. Required for polarization and movement of myocardializing cells in the outflow tract and seems to act via RHOA signaling to regulate this process. Required for cell surface localization of FZD3 and FZD6 in the inner ear. In Homo sapiens (Human), this protein is Vang-like protein 2 (VANGL2).